A 118-amino-acid polypeptide reads, in one-letter code: BLOC-1-related complex subunit 8 (118 aa).

A compositionally biased stretch (polar residues) spans 98 to 107 (KEQISNSQGR). The disordered stretch occupies residues 98-118 (KEQISNSQGRSPHVSAPSASS).

The protein belongs to the BORCS8 family.

The protein localises to the lysosome membrane. Functionally, as part of a BORC-like complex, it may play a role in the movement and localization of lysosomes at the cell periphery. Associated with the cytosolic face of lysosomes, this complex may couple lysosomes to microtubule plus-end-directed kinesin motors, driving lysosome movement toward the cell periphery. The polypeptide is BLOC-1-related complex subunit 8 (Tetraodon nigroviridis (Spotted green pufferfish)).